The primary structure comprises 296 residues: uncharacterized protein (296 aa).

The chain crosses the membrane as a helical span at residues cysteine 7–leucine 26.

Its subcellular location is the membrane. This is an uncharacterized protein from Treponema pallidum (strain Nichols).